The sequence spans 105 residues: U7-hexatoxin-Hi1a (105 aa).

The N-terminal stretch at 1 to 23 (MKTILLFLGVCAVGASMMTGGWT) is a signal peptide.

This sequence belongs to the cystatin family. Post-translationally, contains 2 disulfide bonds. In terms of tissue distribution, expressed by the venom gland.

The protein localises to the secreted. Inhibits various C1 cysteine proteases. This protein has no toxic activity and its function in the venom is unknown. It may play a role as a housekeeping or regulatory protein. The polypeptide is U7-hexatoxin-Hi1a (Hadronyche infensa (Fraser island funnel-web spider)).